Here is a 142-residue protein sequence, read N- to C-terminus: MENKGIRKILPHRYPFLLVDRIIEIEEGKKAVGIKNVTANEPFFQGHFPDNPIMPGVLIVEALAQVAGIAVMNIEEFKGKLGLFTGIDKCRFKKVVRPGDQLVLEVLIDSIKMGLVKAKGVAKVGDEVAATAELMFIMTEEG.

The active site involves histidine 47.

The protein belongs to the thioester dehydratase family. FabZ subfamily.

Its subcellular location is the cytoplasm. It catalyses the reaction a (3R)-hydroxyacyl-[ACP] = a (2E)-enoyl-[ACP] + H2O. Involved in unsaturated fatty acids biosynthesis. Catalyzes the dehydration of short chain beta-hydroxyacyl-ACPs and long chain saturated and unsaturated beta-hydroxyacyl-ACPs. The sequence is that of 3-hydroxyacyl-[acyl-carrier-protein] dehydratase FabZ from Thermoanaerobacter sp. (strain X514).